The chain runs to 173 residues: Alpha-crystallin A chain (173 aa).

The residue at position 1 (Met1) is an N-acetylmethionine. The required for complex formation with BFSP1 and BFSP2 stretch occupies residues 1-63 (MDIAIQHPWF…RSVLDSGISE (63 aa)). At Gln6 the chain carries Deamidated glutamine; partial. Position 45 is a phosphoserine (Ser45). Gln50 bears the Deamidated glutamine; partial mark. A sHSP domain is found at 52–162 (LFRSVLDSGI…GHSERAIPVS (111 aa)). Residue Lys70 is modified to N6-acetyllysine. Deamidated glutamine; partial is present on Gln90. The residue at position 99 (Lys99) is an N6-acetyllysine. His100 is a Zn(2+) binding site. Deamidated asparagine; partial is present on Asn101. 2 residues coordinate Zn(2+): Glu102 and His107. The residue at position 122 (Ser122) is a Phosphoserine. Asn123 carries the deamidated asparagine; partial modification. Residues 144-173 (PKVTSGMDAGHSERAIPVSREEKPSSAPSS) are disordered. Residues 153-167 (GHSERAIPVSREEKP) show a composition bias toward basic and acidic residues. A Zn(2+)-binding site is contributed by His154. Residue Ser162 is glycosylated (O-linked (GlcNAc) serine).

Belongs to the small heat shock protein (HSP20) family. Heteromer composed of three CRYAA and one CRYAB subunits. Inter-subunit bridging via zinc ions enhances stability, which is crucial as there is no protein turn over in the lens. Can also form homodimers and homotetramers (dimers of dimers) which serve as the building blocks of homooligomers. Within homooligomers, the zinc-binding motif is created from residues of 3 different molecules. His-100 and Glu-102 from one molecule are ligands of the zinc ion, and His-107 and His-154 residues from additional molecules complete the site with tetrahedral coordination geometry. Part of a complex required for lens intermediate filament formation composed of BFSP1, BFSP2 and CRYAA. Acetylation at Lys-70 may increase chaperone activity. Post-translationally, undergoes age-dependent proteolytical cleavage at the C-terminus.

It is found in the cytoplasm. The protein localises to the nucleus. In terms of biological role, contributes to the transparency and refractive index of the lens. Acts as a chaperone, preventing aggregation of various proteins under a wide range of stress conditions. Required for the correct formation of lens intermediate filaments as part of a complex composed of BFSP1, BFSP2 and CRYAA. This is Alpha-crystallin A chain (CRYAA) from Phocoena phocoena (Harbor porpoise).